The chain runs to 410 residues: Na(+)/H(+) antiporter NhaA 1/4 (410 aa).

The next 11 membrane-spanning stretches (helical) occupy residues 16 to 36, 55 to 75, 95 to 115, 125 to 145, 156 to 176, 178 to 198, 215 to 235, 275 to 295, 299 to 319, 340 to 360, and 371 to 391; these read VGGS…NSPL, LNLS…FFIV, ALPI…FLAF, GGWG…LAVV, FLLT…AVAC, SGIN…FGYL, AWLL…ACGV, IALP…AGGF, AITW…IFGG, IAGI…IAEL, and AKGA…LLLG.

Belongs to the NhaA Na(+)/H(+) (TC 2.A.33) antiporter family.

It is found in the cell membrane. It catalyses the reaction Na(+)(in) + 2 H(+)(out) = Na(+)(out) + 2 H(+)(in). Its function is as follows. Na(+)/H(+) antiporter that extrudes sodium in exchange for external protons. This is Na(+)/H(+) antiporter NhaA 1/4 from Streptomyces coelicolor (strain ATCC BAA-471 / A3(2) / M145).